The chain runs to 424 residues: MSLIVDVYAREILDSRGNPTVEVDVTLEDGTLGRAAVPSGASTGAYEAVELRDKDTARYFGKGVKTAVAFVNGEIAEALMGIDATDQVGIDSAMIELDGTPNKSRLGANAILGVSLAVAKAAAEATGQPLYRYVGGTSARVLPVPMMNIINGGEHADNPIDIQEFMIMPVSADSIAEAVRMGAEVFHTLKKELSAAGLSTGIGDEGGFAPNLSSTRDALDFVLKAIEKAGYTPGEDIYLALDCAATEYFEDGRYEMKGEGKTLTPEANVDYLEALVNDYPILSIEDGCSEDDWEGWALLTERLGDRVQLVGDDLFVTNPARLAEGIQKGCANSLLVKVNQIGTLTETLSAVDLAHRNRMTCVMSHRSGETEDATIADLAVATNCGQIKTGSLARSDRLAKYNQLIRIEDELGETAIYAGRSILR.

Gln163 is a binding site for (2R)-2-phosphoglycerate. Glu205 functions as the Proton donor in the catalytic mechanism. 3 residues coordinate Mg(2+): Asp242, Glu285, and Asp312. Lys337, Arg366, Ser367, and Lys388 together coordinate (2R)-2-phosphoglycerate. The active-site Proton acceptor is the Lys337.

It belongs to the enolase family. It depends on Mg(2+) as a cofactor.

The protein localises to the cytoplasm. Its subcellular location is the secreted. The protein resides in the cell surface. The catalysed reaction is (2R)-2-phosphoglycerate = phosphoenolpyruvate + H2O. It participates in carbohydrate degradation; glycolysis; pyruvate from D-glyceraldehyde 3-phosphate: step 4/5. In terms of biological role, catalyzes the reversible conversion of 2-phosphoglycerate (2-PG) into phosphoenolpyruvate (PEP). It is essential for the degradation of carbohydrates via glycolysis. This is Enolase from Dinoroseobacter shibae (strain DSM 16493 / NCIMB 14021 / DFL 12).